We begin with the raw amino-acid sequence, 485 residues long: MTPNRRSTDSYNMLGASFDFDPDFSLLSNKTHKNKNPKPPVKLLPYRHGSNTTSSDLDNYIFNSGSGSSDDETPPPAAPIFISLEEVLLNGLLIDFAIDPSGVKFLEANYPLDSEDQIRKAVFEKLTESTTLFVGLCHSRNGNFIVQKLVELATPAEQRELLRQMIDGGLLVMCKDKFACRVVQLALQKFDHSNVFQLIQELSTFDLAAMCTDQISIHVIQRVVKQLPVDMWTFFVHFLSSGDSLMAVCQDKYGCRLVQQVIDRLAENPKLPCFKFRIQLLHSLMTCIVRNCYRLSSNEFANYVIQYVIKSSGIMEMYRDTIIDKCLLRNLLSMSQDKYASHVIEGAFLFAPPALLHEMMEEIFSGYVKDVELNRDALDILLFHQYGNYVVQQMISICTAALIGKEERQLPPAILLLYSGWYEKMKQRVLQHASRLERFSSGKKIIDSVMRHGVPTAAAINAQAAPSLMELTAQFDAMFPSFLAR.

Disordered stretches follow at residues 29–48 (NKTH…PYRH) and 55–76 (SDLD…TPPP). A compositionally biased stretch (polar residues) spans 55 to 68 (SDLDNYIFNSGSGS). Pumilio repeat units follow at residues 86 to 124 (EVLL…AVFE), 125 to 163 (KLTE…ELLR), 164 to 200 (QMID…QLIQ), 201 to 236 (ELST…TFFV), 237 to 279 (HFLS…FRIQ), 287 to 324 (CIVR…TIID), 326 to 361 (CLLR…EMME), and 372 to 411 (ELNR…RQLP). Residues 439 to 454 (FSSGKKIIDSVMRHGV) are RNA-binding.

Its function is as follows. RNA-binding protein that binds to the consensus sequence 5'-CUCUGUAUCUUGU-3' in mRNA 3'-UTRs and modulates mRNA expression and stability. Functions redundantly with puf-5 and puf-7 in oocyte formation and organization, early embryonic cell divisions, and repression of expression of glp-1 and other maternal mRNAs in late oogenesis. This chain is Pumilio domain-containing protein 6, found in Caenorhabditis elegans.